Reading from the N-terminus, the 194-residue chain is MNDEDQDDKTKELPLGKETEANLFKSRSIFIYGPINQELAQKVCSQLVALAAASDEDIRIYVNSPGGHVESGDSIHDMIKFIKPKVWMIGTGWVASAGALIYVATPKERRLCLPNTRFLLHQPSGGTRGMASDIEIQAREIIKMNERLNRIMAAATGQPLDKIDKDTDRDYWLSAEEAKDYGLVSRIVTSQADI.

Ser96 serves as the catalytic Nucleophile. The active site involves His121.

This sequence belongs to the peptidase S14 family. Fourteen ClpP subunits assemble into 2 heptameric rings which stack back to back to give a disk-like structure with a central cavity, resembling the structure of eukaryotic proteasomes.

It localises to the cytoplasm. The catalysed reaction is Hydrolysis of proteins to small peptides in the presence of ATP and magnesium. alpha-casein is the usual test substrate. In the absence of ATP, only oligopeptides shorter than five residues are hydrolyzed (such as succinyl-Leu-Tyr-|-NHMec, and Leu-Tyr-Leu-|-Tyr-Trp, in which cleavage of the -Tyr-|-Leu- and -Tyr-|-Trp bonds also occurs).. Its function is as follows. Cleaves peptides in various proteins in a process that requires ATP hydrolysis. Has a chymotrypsin-like activity. Plays a major role in the degradation of misfolded proteins. This chain is ATP-dependent Clp protease proteolytic subunit 3, found in Rhizobium johnstonii (strain DSM 114642 / LMG 32736 / 3841) (Rhizobium leguminosarum bv. viciae).